The following is a 217-amino-acid chain: 3-demethoxyubiquinol 3-hydroxylase (217 aa).

The Fe cation site is built by Glu-66, Glu-96, His-99, Glu-148, Glu-180, and His-183.

Belongs to the COQ7 family. The cofactor is Fe cation.

The protein localises to the cell membrane. It catalyses the reaction a 5-methoxy-2-methyl-3-(all-trans-polyprenyl)benzene-1,4-diol + AH2 + O2 = a 3-demethylubiquinol + A + H2O. It participates in cofactor biosynthesis; ubiquinone biosynthesis. Its function is as follows. Catalyzes the hydroxylation of 2-nonaprenyl-3-methyl-6-methoxy-1,4-benzoquinol during ubiquinone biosynthesis. This Xanthomonas axonopodis pv. citri (strain 306) protein is 3-demethoxyubiquinol 3-hydroxylase.